We begin with the raw amino-acid sequence, 591 residues long: MAISNVISVLLLLLVLINLSNQNIKGIDAFHQIYEELQSESVESVNHLHRPSFHFQPPKHWINDPNGPVYYKGLYHLFYQYNTKGAVWGNIIWAHSVSKDLVNWEALEPALSPSKWFDIGGTWSGSITIVPGKGPIILYTGVNQNETQLQNYAIPEDPSDPYLRKWIKPDDNPIAIPDYTMNGSAFRDPTTAWFSKDGHWRTVVGSKRKRRGIAYIYRSRDFKHWVKAKHPVHSKQSTGMWECPDFFPVSLTDFRNGLDLDYVGPNTKHVLKVSLDITRYEYYTLGKYDLKKDRYIPDGNTPDGWEGLRFDYGNFYASKTFFDYKKNRRILWGWANESDTVEDDILKGWAGLQVIPRTVLLDSSKKQLVFWPVEEIESLRGNYVRMNNHDIKMGQRIEVKGITPAQADVEVTFYVGSLEKAEIFDPSFTWKPLELCNIKGSNVRGGVGPFGLITLATPDLEEYTPVFFRVFNDTKTHKPKVLMCSDARPSSLKQDTGLLAKDRMYKPSFAGFVDVDMADGRISLRSLIDHSVVESFGALGKTVITSRVYPVKAVKENAHLYVFNNGTQTVTIESLNAWNMDRPLQMNDGAL.

The N-terminal stretch at 1-22 (MAISNVISVLLLLLVLINLSNQ) is a signal peptide. Substrate contacts are provided by residues 61–64 (WIND), Gln80, Trp88, and 123–124 (WS). Asp64 is an active-site residue. N-linked (GlcNAc...) asparagine glycans are attached at residues Asn145 and Asn182. Substrate is bound by residues 187-188 (RD), Glu242, and Asp276. N-linked (GlcNAc...) asparagine glycans are attached at residues Asn336, Asn472, and Asn565. Cys436 and Cys484 are oxidised to a cystine.

It belongs to the glycosyl hydrolase 32 family. In terms of tissue distribution, expressed in flowers, and seeds, and, to a lower extent, in seedlings.

The protein localises to the secreted. Its subcellular location is the extracellular space. The protein resides in the apoplast. It is found in the cell wall. It catalyses the reaction Hydrolysis of terminal non-reducing beta-D-fructofuranoside residues in beta-D-fructofuranosides.. The sequence is that of Beta-fructofuranosidase, insoluble isoenzyme CWINV4 (CWINV4) from Arabidopsis thaliana (Mouse-ear cress).